A 470-amino-acid polypeptide reads, in one-letter code: Aminodeoxychorismate synthase component 1 (470 aa).

The protein belongs to the anthranilate synthase component I family. In terms of assembly, monomer. Heterodimer consisting of two non-identical subunits: a glutamine amidotransferase subunit (PabA) and a aminodeoxychorismate synthase subunit (PabB). The cofactor is Mg(2+).

It catalyses the reaction chorismate + L-glutamine = 4-amino-4-deoxychorismate + L-glutamate. It participates in cofactor biosynthesis; tetrahydrofolate biosynthesis; 4-aminobenzoate from chorismate: step 1/2. In terms of biological role, part of a heterodimeric complex that catalyzes the two-step biosynthesis of 4-amino-4-deoxychorismate (ADC), a precursor of p-aminobenzoate (PABA) and tetrahydrofolate. In the first step, a glutamine amidotransferase (PabA) generates ammonia as a substrate that, along with chorismate, is used in the second step, catalyzed by aminodeoxychorismate synthase (PabB) to produce ADC. The polypeptide is Aminodeoxychorismate synthase component 1 (pabB) (Lactococcus lactis subsp. lactis (Streptococcus lactis)).